A 211-amino-acid chain; its full sequence is Guanylate kinase (211 aa).

Residues Gly-7–Arg-187 form the Guanylate kinase-like domain. Gly-14 to Ala-21 is a binding site for ATP.

Belongs to the guanylate kinase family.

The protein resides in the cytoplasm. It carries out the reaction GMP + ATP = GDP + ADP. Functionally, essential for recycling GMP and indirectly, cGMP. The chain is Guanylate kinase from Aster yellows witches'-broom phytoplasma (strain AYWB).